Reading from the N-terminus, the 127-residue chain is Small ribosomal subunit protein bS6 (127 aa).

The tract at residues 99–127 (PLPAPRVVPGSEPAAAPQEQPAANSEAAS) is disordered. Over residues 109 to 127 (SEPAAAPQEQPAANSEAAS) the composition is skewed to low complexity.

It belongs to the bacterial ribosomal protein bS6 family.

In terms of biological role, binds together with bS18 to 16S ribosomal RNA. This chain is Small ribosomal subunit protein bS6, found in Parasynechococcus marenigrum (strain WH8102).